A 1905-amino-acid polypeptide reads, in one-letter code: Low-density lipoprotein receptor-related protein 4 (1905 aa).

An N-terminal signal peptide occupies residues 1 to 20 (MRRQWGALLLGALLCAHGLA). Topologically, residues 21-1725 (SSPECACGRS…AAPGEGLHIS (1705 aa)) are extracellular. LDL-receptor class A domains are found at residues 26–67 (ACGR…DGCI), 70–106 (TCSPLDFHCDNGKCIRRSWVCDGDNDCEDDSDEQDCP), 109–144 (ECEEDEFPCQNGYCIRSLWHCDGDNDCGDNSDEQCD), 147–183 (KCSDKEFRCSDGSCIAEHWYCDGDTDCKDGSDEENCP), 190–226 (PCNLEEFQCAYGRCILDIYHCDGDDDCGDWSDESDCS), 230–266 (PCRSGEFMCDSGLCINAGWRCDGDADCDDQSDERNCT), 269–305 (MCTAEQFRCHSGRCVRLSWRCDGEDDCADNSDEENCE), and 311–350 (QCALDQFLCWNGRCIGQRKLCNGVNDCGDNSDESPQQNCR). Disulfide bonds link Cys-27–Cys-44, Cys-34–Cys-57, Cys-51–Cys-66, Cys-71–Cys-83, Cys-78–Cys-96, Cys-90–Cys-105, Cys-110–Cys-122, Cys-117–Cys-135, Cys-129–Cys-143, Cys-148–Cys-160, Cys-155–Cys-173, Cys-167–Cys-182, Cys-191–Cys-203, Cys-198–Cys-216, Cys-210–Cys-225, Cys-231–Cys-243, Cys-238–Cys-256, Cys-250–Cys-265, Cys-270–Cys-282, Cys-277–Cys-295, Cys-289–Cys-304, Cys-312–Cys-324, Cys-319–Cys-337, Cys-331–Cys-349, Cys-358–Cys-369, Cys-365–Cys-378, Cys-380–Cys-393, Cys-399–Cys-409, Cys-405–Cys-418, and Cys-420–Cys-433. Residue Asn-264 is glycosylated (N-linked (GlcNAc...) asparagine). The 41-residue stretch at 354–394 (GEENCNVNNGGCAQKCQMVRGAVQCTCHTGYRLTEDGHTCQ) folds into the EGF-like 1; calcium-binding domain. Residues 395–434 (DVNECAEEGYCSQGCTNSEGAFQCWCETGYELRPDRRSCK) form the EGF-like 2; calcium-binding domain. LDL-receptor class B repeat units follow at residues 480 to 522 (ELVF…DWVH), 523 to 565 (DKLY…HPME), 566 to 609 (GTIY…DYAG), 610 to 652 (RRMY…FEDS), and 653 to 693 (LYWT…LHPQ). Asn-498 carries N-linked (GlcNAc...) asparagine glycosylation. Residues 698–737 (GKNRCGDNNGGCTHLCLPSGQNYTCACPTGFRKISSHACA) form the EGF-like 3 domain. Cystine bridges form between Cys-702-Cys-713, Cys-709-Cys-722, and Cys-724-Cys-736. N-linked (GlcNAc...) asparagine glycosylation occurs at Asn-719. LDL-receptor class B repeat units follow at residues 785 to 827 (DHVY…DWVT), 828 to 870 (NKLY…EPMG), 871 to 914 (GYMY…DYGS), 915 to 956 (QRLY…LYGE), and 957 to 998 (RIYW…FHRR). A glycan (N-linked (GlcNAc...) asparagine) is linked at Asn-901. N-linked (GlcNAc...) asparagine glycosylation occurs at Asn-1077. LDL-receptor class B repeat units lie at residues 1093-1135 (GKVY…DAIG), 1136-1178 (RKVY…YHEM), 1179-1222 (GFMY…DKAS), 1223-1263 (SQLL…LLDS), 1264-1306 (YIYW…DRAQ), 1397-1439 (GKVY…DWVA), 1440-1482 (RNLY…FPRK), 1483-1526 (GYLF…DYDT), 1527-1568 (RRIY…QDRW), and 1569-1610 (IYWT…SPQR). Asn-1415 and Asn-1467 each carry an N-linked (GlcNAc...) asparagine glycan. A disordered region spans residues 1659–1686 (PRATGMSEKSPVLPNTPPTTLYSSTTRT). Residues 1676-1686 (PTTLYSSTTRT) show a composition bias toward low complexity. A helical membrane pass occupies residues 1726–1746 (YAIGGLLSILLILVVIAALML). Over 1747–1905 (YRHKKSKFTD…ERKLSSESQV (159 aa)) the chain is Cytoplasmic. The Endocytosis signal signature appears at 1766–1769 (NPSY). The disordered stretch occupies residues 1852-1905 (ASSGSLDDTETEQLLQEEQSECSSVHTAATPERRGSLPDTGWKHERKLSSESQV). Over residues 1882-1905 (PERRGSLPDTGWKHERKLSSESQV) the composition is skewed to basic and acidic residues.

This sequence belongs to the LDLR family. In terms of assembly, homooligomer. Interacts with MUSK; the heterodimer forms an AGRIN receptor complex that binds AGRIN resulting in activation of MUSK. Interacts (via the extracellular domain) with SOST; the interaction facilitates the inhibition of Wnt signaling. Interacts with MESD; the interaction promotes glycosylation of LRP4 and its cell-surface expression. In terms of tissue distribution, expressed in bone; present in osteoblasts and osteocytes. No expression is observed in osteoclast. Expressed in several regions of the brain.

It is found in the cell membrane. Its function is as follows. Mediates SOST-dependent inhibition of bone formation. Functions as a specific facilitator of SOST-mediated inhibition of Wnt signaling. Plays a key role in the formation and the maintenance of the neuromuscular junction (NMJ), the synapse between motor neuron and skeletal muscle. Directly binds AGRIN and recruits it to the MUSK signaling complex. Mediates the AGRIN-induced phosphorylation of MUSK, the kinase of the complex. The activation of MUSK in myotubes induces the formation of NMJ by regulating different processes including the transcription of specific genes and the clustering of AChR in the postsynaptic membrane. Alternatively, may be involved in the negative regulation of the canonical Wnt signaling pathway, being able to antagonize the LRP6-mediated activation of this pathway. More generally, has been proposed to function as a cell surface endocytic receptor binding and internalizing extracellular ligands for degradation by lysosomes. May play an essential role in the process of digit differentiation. This chain is Low-density lipoprotein receptor-related protein 4 (LRP4), found in Homo sapiens (Human).